We begin with the raw amino-acid sequence, 521 residues long: Phosphoethanolamine transferase EptA (521 aa).

6 helical membrane-spanning segments follow: residues 18 to 38 (AGLL…FVYV), 47 to 67 (FIAM…LALG), 79 to 99 (IVFS…KVFL), 118 to 138 (FLSV…GYVI), 150 to 170 (APFL…LANT), and 182 to 202 (FIGG…VSAL).

Belongs to the phosphoethanolamine transferase family. EptA subfamily.

It is found in the cell inner membrane. It participates in bacterial outer membrane biogenesis; LPS lipid A biosynthesis. Its function is as follows. Probably catalyzes the addition of a phosphoethanolamine moiety to the dephosphorylated 1-position of the disaccharide backbone of lipid A. Lipid A that is 1-phosphorylated is not a substrate for this enzyme. In Helicobacter pylori (strain ATCC 700392 / 26695) (Campylobacter pylori), this protein is Phosphoethanolamine transferase EptA.